We begin with the raw amino-acid sequence, 61 residues long: UPF0391 membrane protein Pnap_0032 (61 aa).

The next 2 helical transmembrane spans lie at 5–25 and 33–53; these read AIIFAVISLIAGALGFSGVAA and VLFGLFLILAVIFIVLAALGV.

The protein belongs to the UPF0391 family.

Its subcellular location is the cell membrane. The chain is UPF0391 membrane protein Pnap_0032 from Polaromonas naphthalenivorans (strain CJ2).